Here is a 121-residue protein sequence, read N- to C-terminus: Mitochondrial intermembrane space cysteine motif-containing protein MIX14 (121 aa).

CHCH domains are found at residues 14 to 56 (VANC…VPSV) and 60 to 105 (MSEC…VKNK). Short sequence motifs (cx9C motif) lie at residues 17 to 27 (CPQEFLQYHKC), 38 to 48 (CKDGRMILSTC), 63 to 73 (CSEPMKKYDQC), and 87 to 97 (CLGFLQDLRKC). Disulfide bonds link Cys17–Cys48, Cys27–Cys38, Cys63–Cys97, and Cys73–Cys87.

The protein resides in the mitochondrion intermembrane space. The polypeptide is Mitochondrial intermembrane space cysteine motif-containing protein MIX14 (MIX14) (Saccharomyces cerevisiae (strain ATCC 204508 / S288c) (Baker's yeast)).